Consider the following 149-residue polypeptide: D-aminoacyl-tRNA deacylase (149 aa).

Residues 137–138 (GP) carry the Gly-cisPro motif, important for rejection of L-amino acids motif.

The protein belongs to the DTD family. In terms of assembly, homodimer.

The protein resides in the cytoplasm. The catalysed reaction is glycyl-tRNA(Ala) + H2O = tRNA(Ala) + glycine + H(+). The enzyme catalyses a D-aminoacyl-tRNA + H2O = a tRNA + a D-alpha-amino acid + H(+). An aminoacyl-tRNA editing enzyme that deacylates mischarged D-aminoacyl-tRNAs. Also deacylates mischarged glycyl-tRNA(Ala), protecting cells against glycine mischarging by AlaRS. Acts via tRNA-based rather than protein-based catalysis; rejects L-amino acids rather than detecting D-amino acids in the active site. By recycling D-aminoacyl-tRNA to D-amino acids and free tRNA molecules, this enzyme counteracts the toxicity associated with the formation of D-aminoacyl-tRNA entities in vivo and helps enforce protein L-homochirality. The protein is D-aminoacyl-tRNA deacylase of Clostridium kluyveri (strain ATCC 8527 / DSM 555 / NBRC 12016 / NCIMB 10680 / K1).